Here is a 91-residue protein sequence, read N- to C-terminus: Small integral membrane protein 12-B (91 aa).

The helical transmembrane segment at 12 to 34 threads the bilayer; the sequence is YAPYITFPVAFVVGAVGYQLEWF.

The protein belongs to the SMIM12 family.

The protein localises to the membrane. This Xenopus laevis (African clawed frog) protein is Small integral membrane protein 12-B (smim12-b).